The sequence spans 334 residues: Glyceraldehyde-3-phosphate dehydrogenase (334 aa).

NAD(+)-binding positions include 10 to 11 (RI), Asp-33, Lys-77, and Thr-119. D-glyceraldehyde 3-phosphate is bound by residues 149-151 (SCT), Thr-180, 209-210 (TG), and Arg-232. Catalysis depends on Cys-150, which acts as the Nucleophile. Asn-314 contacts NAD(+).

It belongs to the glyceraldehyde-3-phosphate dehydrogenase family. As to quaternary structure, homotetramer.

Its subcellular location is the cytoplasm. It catalyses the reaction D-glyceraldehyde 3-phosphate + phosphate + NAD(+) = (2R)-3-phospho-glyceroyl phosphate + NADH + H(+). The protein operates within carbohydrate degradation; glycolysis; pyruvate from D-glyceraldehyde 3-phosphate: step 1/5. In terms of biological role, catalyzes the oxidative phosphorylation of glyceraldehyde 3-phosphate (G3P) to 1,3-bisphosphoglycerate (BPG) using the cofactor NAD. The first reaction step involves the formation of a hemiacetal intermediate between G3P and a cysteine residue, and this hemiacetal intermediate is then oxidized to a thioester, with concomitant reduction of NAD to NADH. The reduced NADH is then exchanged with the second NAD, and the thioester is attacked by a nucleophilic inorganic phosphate to produce BPG. In Chlamydia trachomatis serovar D (strain ATCC VR-885 / DSM 19411 / UW-3/Cx), this protein is Glyceraldehyde-3-phosphate dehydrogenase (gap).